A 698-amino-acid chain; its full sequence is tRNA (guanine(37)-N(1))-methyltransferase (698 aa).

The disordered stretch occupies residues serine 207–glycine 242. S-adenosyl-L-methionine contacts are provided by residues histidine 427, aspartate 465–leucine 466, aspartate 494–glycine 495, and asparagine 536.

Belongs to the class I-like SAM-binding methyltransferase superfamily. TRM5/TYW2 family. In terms of assembly, monomer.

It localises to the mitochondrion matrix. Its subcellular location is the nucleus. It is found in the cytoplasm. The catalysed reaction is guanosine(37) in tRNA + S-adenosyl-L-methionine = N(1)-methylguanosine(37) in tRNA + S-adenosyl-L-homocysteine + H(+). In terms of biological role, specifically methylates the N1 position of guanosine-37 in various cytoplasmic and mitochondrial tRNAs. Methylation is not dependent on the nature of the nucleoside 5' of the target nucleoside. This is the first step in the biosynthesis of wybutosine (yW), a modified base adjacent to the anticodon of tRNAs and required for accurate decoding. The sequence is that of tRNA (guanine(37)-N(1))-methyltransferase from Leishmania braziliensis.